A 354-amino-acid polypeptide reads, in one-letter code: Methylthioribose-1-phosphate isomerase (354 aa).

Substrate contacts are provided by residues 58–60, R101, and Q204; that span reads RGA. The active-site Proton donor is D245. Position 255–256 (255–256) interacts with substrate; the sequence is NK.

The protein belongs to the eIF-2B alpha/beta/delta subunits family. MtnA subfamily.

The enzyme catalyses 5-(methylsulfanyl)-alpha-D-ribose 1-phosphate = 5-(methylsulfanyl)-D-ribulose 1-phosphate. Its pathway is amino-acid biosynthesis; L-methionine biosynthesis via salvage pathway; L-methionine from S-methyl-5-thio-alpha-D-ribose 1-phosphate: step 1/6. Functionally, catalyzes the interconversion of methylthioribose-1-phosphate (MTR-1-P) into methylthioribulose-1-phosphate (MTRu-1-P). This Stenotrophomonas maltophilia (strain R551-3) protein is Methylthioribose-1-phosphate isomerase.